Consider the following 290-residue polypeptide: MAAEFKHISVLKEELVAGLGVKPEGHYLDVTLGGGGHTELILQQYPDVRVTGVDRDSQAIAAASERLKSFGDRFRAVRSNFGEYQPQGEKFDGIIADLGVSSVQFDQGDRGFSFRFDAPLDMRMDQQQTLTAADIVNTYEEKALANLFYEYGDERLSRQIAKKIVMKRPIQTTKELEEIVFYTYHPKARKVKIHPATRVFQALRIAVNGELDALQYLLVNAPQWLKPQGRLGIISFHSLEDRLVKNAFRQRDIWRILTKKPMVASETEINQNPRARSAKLRFAELKETTE.

S-adenosyl-L-methionine contacts are provided by residues 35–37, aspartate 54, phenylalanine 81, aspartate 97, and glutamine 104; that span reads GGH.

The protein belongs to the methyltransferase superfamily. RsmH family.

It is found in the cytoplasm. It carries out the reaction cytidine(1402) in 16S rRNA + S-adenosyl-L-methionine = N(4)-methylcytidine(1402) in 16S rRNA + S-adenosyl-L-homocysteine + H(+). In terms of biological role, specifically methylates the N4 position of cytidine in position 1402 (C1402) of 16S rRNA. In Picosynechococcus sp. (strain ATCC 27264 / PCC 7002 / PR-6) (Agmenellum quadruplicatum), this protein is Ribosomal RNA small subunit methyltransferase H.